Reading from the N-terminus, the 302-residue chain is Recombination-associated protein RdgC (302 aa).

Belongs to the RdgC family.

The protein resides in the cytoplasm. Its subcellular location is the nucleoid. Its function is as follows. May be involved in recombination. This Actinobacillus pleuropneumoniae serotype 5b (strain L20) protein is Recombination-associated protein RdgC.